Consider the following 193-residue polypeptide: Potassium-transporting ATPase KdpC subunit (193 aa).

The chain crosses the membrane as a helical span at residues 7–27 (PMIVIFAVLAALTGLAYPAVM).

It belongs to the KdpC family. As to quaternary structure, the system is composed of three essential subunits: KdpA, KdpB and KdpC.

It is found in the cell inner membrane. Its function is as follows. Part of the high-affinity ATP-driven potassium transport (or Kdp) system, which catalyzes the hydrolysis of ATP coupled with the electrogenic transport of potassium into the cytoplasm. This subunit acts as a catalytic chaperone that increases the ATP-binding affinity of the ATP-hydrolyzing subunit KdpB by the formation of a transient KdpB/KdpC/ATP ternary complex. The protein is Potassium-transporting ATPase KdpC subunit of Paraburkholderia phymatum (strain DSM 17167 / CIP 108236 / LMG 21445 / STM815) (Burkholderia phymatum).